The primary structure comprises 313 residues: Proline iminopeptidase (313 aa).

Positions 35 to 298 (KPVVMLHGGP…SPASGHSAFE (264 aa)) constitute an AB hydrolase-1 domain. Serine 110 acts as the Nucleophile in catalysis. The active site involves aspartate 266. The active-site Proton donor is histidine 294.

It belongs to the peptidase S33 family. In terms of assembly, homooligomer.

Its subcellular location is the cytoplasm. It catalyses the reaction Release of N-terminal proline from a peptide.. Functionally, may be involved in proline metabolism and sensitivity to ascamycin. Has ascamycin dealanylating activity. This is Proline iminopeptidase (pip) from Xanthomonas citri (Xanthomonas campestris pv. citri).